The sequence spans 505 residues: Glycerol kinase (505 aa).

Position 17 (T17) interacts with ADP. The ATP site is built by T17, T18, and S19. T17 lines the sn-glycerol 3-phosphate pocket. Residue R21 participates in ADP binding. Residues R87, E88, Y139, and D250 each contribute to the sn-glycerol 3-phosphate site. 5 residues coordinate glycerol: R87, E88, Y139, D250, and Q251. T272 and G315 together coordinate ADP. Residues T272, G315, Q319, and G416 each coordinate ATP. Positions 416 and 420 each coordinate ADP.

It belongs to the FGGY kinase family.

It carries out the reaction glycerol + ATP = sn-glycerol 3-phosphate + ADP + H(+). It participates in polyol metabolism; glycerol degradation via glycerol kinase pathway; sn-glycerol 3-phosphate from glycerol: step 1/1. Its activity is regulated as follows. Inhibited by fructose 1,6-bisphosphate (FBP). In terms of biological role, key enzyme in the regulation of glycerol uptake and metabolism. Catalyzes the phosphorylation of glycerol to yield sn-glycerol 3-phosphate. In Azotobacter vinelandii (strain DJ / ATCC BAA-1303), this protein is Glycerol kinase.